The chain runs to 335 residues: Holliday junction branch migration complex subunit RuvB (335 aa).

The interval 1-181 (MERIVEVEKF…FGMHFRLQFY (181 aa)) is large ATPase domain (RuvB-L). ATP-binding positions include Leu20, Arg21, Gly62, Lys65, Thr66, Thr67, 128–130 (EDF), Arg171, Tyr181, and Arg218. Thr66 is a binding site for Mg(2+). Positions 182-252 (TPQELAQIIT…RTQKALEALG (71 aa)) are small ATPAse domain (RuvB-S). The interval 255–335 (ERGFDELDLK…LTPNIQNSLF (81 aa)) is head domain (RuvB-H). Residues Arg309 and Arg314 each contribute to the DNA site.

The protein belongs to the RuvB family. As to quaternary structure, homohexamer. Forms an RuvA(8)-RuvB(12)-Holliday junction (HJ) complex. HJ DNA is sandwiched between 2 RuvA tetramers; dsDNA enters through RuvA and exits via RuvB. An RuvB hexamer assembles on each DNA strand where it exits the tetramer. Each RuvB hexamer is contacted by two RuvA subunits (via domain III) on 2 adjacent RuvB subunits; this complex drives branch migration. In the full resolvosome a probable DNA-RuvA(4)-RuvB(12)-RuvC(2) complex forms which resolves the HJ.

It localises to the cytoplasm. The enzyme catalyses ATP + H2O = ADP + phosphate + H(+). Its function is as follows. The RuvA-RuvB-RuvC complex processes Holliday junction (HJ) DNA during genetic recombination and DNA repair, while the RuvA-RuvB complex plays an important role in the rescue of blocked DNA replication forks via replication fork reversal (RFR). RuvA specifically binds to HJ cruciform DNA, conferring on it an open structure. The RuvB hexamer acts as an ATP-dependent pump, pulling dsDNA into and through the RuvAB complex. RuvB forms 2 homohexamers on either side of HJ DNA bound by 1 or 2 RuvA tetramers; 4 subunits per hexamer contact DNA at a time. Coordinated motions by a converter formed by DNA-disengaged RuvB subunits stimulates ATP hydrolysis and nucleotide exchange. Immobilization of the converter enables RuvB to convert the ATP-contained energy into a lever motion, pulling 2 nucleotides of DNA out of the RuvA tetramer per ATP hydrolyzed, thus driving DNA branch migration. The RuvB motors rotate together with the DNA substrate, which together with the progressing nucleotide cycle form the mechanistic basis for DNA recombination by continuous HJ branch migration. Branch migration allows RuvC to scan DNA until it finds its consensus sequence, where it cleaves and resolves cruciform DNA. The polypeptide is Holliday junction branch migration complex subunit RuvB (Nitratiruptor sp. (strain SB155-2)).